The primary structure comprises 54 residues: Light-harvesting protein B-800/850 alpha chain (54 aa).

Residues 1–14 (MTNGKIWLVVKPTV) lie on the Cytoplasmic side of the membrane. The helical transmembrane segment at 15 to 35 (GVPLFLSAAVIASVVIHAAVL) threads the bilayer. A bacteriochlorophyll is bound at residue His-31. Over 36-54 (TTTTWLPAYYQGSAAVAAE) the chain is Periplasmic.

This sequence belongs to the antenna complex alpha subunit family. In terms of assembly, the core complex is formed by different alpha and beta chains, binding bacteriochlorophyll molecules, and arranged most probably in tetrameric structures disposed around the reaction center. The non-pigmented gamma chains may constitute additional components.

Its subcellular location is the cell inner membrane. Its function is as follows. Antenna complexes are light-harvesting systems, which transfer the excitation energy to the reaction centers. This Cereibacter sphaeroides (Rhodobacter sphaeroides) protein is Light-harvesting protein B-800/850 alpha chain (pucA).